The sequence spans 113 residues: U11-theraphotoxin-Hhn1a (113 aa).

The signal sequence occupies residues 1–21 (MNTVRATFLLVFVLAVSLGQA). Residues 22–74 (DKDENRMEMQEKTEQGKSYLDFAENLLLQKLEELEAKLLEEDSEESRNSRQKR) constitute a propeptide that is removed on maturation. Residues 60–69 (LEEDSEESRN) show a composition bias toward basic and acidic residues. The interval 60–82 (LEEDSEESRNSRQKRCIGEGVPC) is disordered. 3 cysteine pairs are disulfide-bonded: cysteine 75–cysteine 90, cysteine 82–cysteine 95, and cysteine 89–cysteine 110.

The protein belongs to the neurotoxin 14 (magi-1) family. 01 (HNTX-16) subfamily. As to expression, expressed by the venom gland.

Its subcellular location is the secreted. Its function is as follows. Probable ion channel inhibitor. This is U11-theraphotoxin-Hhn1a from Cyriopagopus hainanus (Chinese bird spider).